The chain runs to 478 residues: Signal recognition particle receptor FtsY (478 aa).

Composition is skewed to basic and acidic residues over residues 14 to 33 and 45 to 56; these read KDKAETEERPQEDAALERGN and AEAHDAVDKDPV. Residues 14–94 form a disordered region; that stretch reads KDKAETEERP…DAPLLPGAEL (81 aa). A compositionally biased stretch (acidic residues) spans 71-86; the sequence is EAVDVAPAEDDEEEDA. GTP contacts are provided by residues 283 to 290, 365 to 369, and 429 to 432; these read GVNGTGKT, DTAGR, and TKLD.

The protein belongs to the GTP-binding SRP family. FtsY subfamily. Part of the signal recognition particle protein translocation system, which is composed of SRP and FtsY. SRP is a ribonucleoprotein composed of Ffh and a 4.5S RNA molecule.

The protein localises to the cell inner membrane. It localises to the cytoplasm. It catalyses the reaction GTP + H2O = GDP + phosphate + H(+). Functionally, involved in targeting and insertion of nascent membrane proteins into the cytoplasmic membrane. Acts as a receptor for the complex formed by the signal recognition particle (SRP) and the ribosome-nascent chain (RNC). Interaction with SRP-RNC leads to the transfer of the RNC complex to the Sec translocase for insertion into the membrane, the hydrolysis of GTP by both Ffh and FtsY, and the dissociation of the SRP-FtsY complex into the individual components. This is Signal recognition particle receptor FtsY from Agrobacterium fabrum (strain C58 / ATCC 33970) (Agrobacterium tumefaciens (strain C58)).